Consider the following 202-residue polypeptide: T-cell surface glycoprotein CD3 epsilon chain (202 aa).

Positions 1–21 (MPSGSLWRVLGLCLLSVGAWG) are cleaved as a signal peptide. The Extracellular portion of the chain corresponds to 22–125 (QEDNEDPLEP…NCVEVDTMTA (104 aa)). In terms of domain architecture, Ig-like spans 33–107 (PQTSASARYK…TSNSLEKNYL (75 aa)). The cysteines at positions 54 and 96 are disulfide-linked. Residues 126–146 (VAIVVADVCITLGFLLLVYYW) traverse the membrane as a helical segment. The Cytoplasmic portion of the chain corresponds to 147–202 (SKNKKASSVTMMRGPGAGGRPRGQNKEKPPPVPNPDYEPIRKGQQDLYSGLNQRGI). The disordered stretch occupies residues 156–202 (TMMRGPGAGGRPRGQNKEKPPPVPNPDYEPIRKGQQDLYSGLNQRGI). The NUMB-binding region stretch occupies residues 170–187 (QNKEKPPPVPNPDYEPIR). The region spanning 173–200 (EKPPPVPNPDYEPIRKGQQDLYSGLNQR) is the ITAM domain. The proline-rich sequence stretch occupies residues 174 to 181 (KPPPVPNP). Tyrosine 183 and tyrosine 194 each carry phosphotyrosine. A compositionally biased stretch (polar residues) spans 192-202 (DLYSGLNQRGI).

As to quaternary structure, the TCR-CD3 complex is composed of a CD3D/CD3E and a CD3G/CD3E heterodimers that preferentially associate with TCRalpha and TCRbeta, respectively, to form TCRalpha/CD3E/CD3G and TCRbeta/CD3G/CD3E trimers. In turn, the hexamer interacts with CD3Z homodimer to form the TCR-CD3 complex. Alternatively, TCRalpha and TCRbeta can be replaced by TCRgamma and TCRdelta. Interacts with CD6. Interacts (via Proline-rich sequence) with NCK1; the interaction is ligand dependent but independent of tyrosine kinase activation. In terms of processing, phosphorylated on Tyr residues after T-cell receptor triggering by LCK in association with CD4/CD8.

Its subcellular location is the cell membrane. Its function is as follows. Part of the TCR-CD3 complex present on T-lymphocyte cell surface that plays an essential role in adaptive immune response. When antigen presenting cells (APCs) activate T-cell receptor (TCR), TCR-mediated signals are transmitted across the cell membrane by the CD3 chains CD3D, CD3E, CD3G and CD3Z. All CD3 chains contain immunoreceptor tyrosine-based activation motifs (ITAMs) in their cytoplasmic domain. Upon TCR engagement, these motifs become phosphorylated by Src family protein tyrosine kinases LCK and FYN, resulting in the activation of downstream signaling pathways. In addition of this role of signal transduction in T-cell activation, CD3E plays an essential role in correct T-cell development. Also participates in internalization and cell surface down-regulation of TCR-CD3 complexes via endocytosis sequences present in CD3E cytosolic region. In addition to its role as a TCR coreceptor, it serves as a receptor for ITPRIPL1. Ligand recognition inhibits T-cell activation by promoting interaction with NCK1, which prevents CD3E-ZAP70 interaction and blocks the ERK-NFkB signaling cascade and calcium influx. In Felis catus (Cat), this protein is T-cell surface glycoprotein CD3 epsilon chain (CD3E).